A 458-amino-acid polypeptide reads, in one-letter code: UPF0210 protein MmarC6_1246 (458 aa).

Belongs to the UPF0210 family.

This chain is UPF0210 protein MmarC6_1246, found in Methanococcus maripaludis (strain C6 / ATCC BAA-1332).